The chain runs to 196 residues: Probable GTP-binding protein EngB (196 aa).

Positions 22–196 constitute an EngB-type G domain; sequence NLPEIALAGR…GNWIEDKISQ (175 aa). GTP contacts are provided by residues 30 to 37, 57 to 61, 75 to 78, 142 to 145, and 175 to 177; these read GRSNVGKS, GKTQT, DVPG, TKMD, and FSS. S37 and T59 together coordinate Mg(2+).

It belongs to the TRAFAC class TrmE-Era-EngA-EngB-Septin-like GTPase superfamily. EngB GTPase family. Mg(2+) is required as a cofactor.

Its function is as follows. Necessary for normal cell division and for the maintenance of normal septation. The chain is Probable GTP-binding protein EngB from Lactobacillus acidophilus (strain ATCC 700396 / NCK56 / N2 / NCFM).